The chain runs to 156 residues: MGIFAFENEQSSTVAPAKLYKALTKDSDEIVPKVIEPIQSVEIVEGNGGPGTIKKIIAIHDGHTSFVLHKLDAIDEANLTYNYSIIGGEGLDESLEKISYESKILPGPDGGSIGKINVKFHTKGDVLSETVRDQAKFKGLGLFKAIEGYVLAHPDY.

Residues asparagine 8 and aspartate 28 each contribute to the trans-zeatin site. Residues proline 32 and isoleucine 38 each coordinate Ca(2+). Trans-zeatin-binding residues include lysine 54, aspartate 133, and lysine 136.

The protein belongs to the BetVI family. Expressed constitutively in roots.

It localises to the cytoplasm. It is found in the cytosol. Functionally, class II ribonuclease (RNase). Binds to cytokinins. Interacts with melatonin. The sequence is that of Protein LlR18A (LLR18A) from Lupinus luteus (European yellow lupine).